The sequence spans 612 residues: Threonine--tRNA ligase (612 aa).

Positions 218–509 (DHRKLGVELG…LSEHFGGNFP (292 aa)) are catalytic. Zn(2+)-binding residues include Cys-310, His-361, and His-486.

Belongs to the class-II aminoacyl-tRNA synthetase family. Homodimer. It depends on Zn(2+) as a cofactor.

The protein resides in the cytoplasm. The enzyme catalyses tRNA(Thr) + L-threonine + ATP = L-threonyl-tRNA(Thr) + AMP + diphosphate + H(+). Its function is as follows. Catalyzes the attachment of threonine to tRNA(Thr) in a two-step reaction: L-threonine is first activated by ATP to form Thr-AMP and then transferred to the acceptor end of tRNA(Thr). Also edits incorrectly charged L-seryl-tRNA(Thr). This Helicobacter pylori (strain G27) protein is Threonine--tRNA ligase.